Consider the following 627-residue polypeptide: MVRVSLWLSVTAVAVLFGWGSWQRRWIADDGLIVLRTVRNLLAGNGPVFNQGERVEANTSTAWTYLLYVGGWVGGPMRLEYVALALAMVLSLLGMVLLMLGTGRLYAPSLRGRRAIMLPAGALVYIAVPPARDFATSGLESGLVLAYLGLLWWMMVCWSQPLRARPDSQMFLGALAFVAGCSVLVRPEFALIGGLALIMMLIAARTWRRRVLIVLAGGFLPVAYQIFRMGYYGLLVPSTALAKDAAGDKWSQGMIYVSNFNRPYALWVPLVLSVPLGLLLMTARRRPSFLRPVLAPDYGRVARAVQSPPAVVAFIVGSGVLQALYWIRQGGDFMHGRVLLAPLFCLLAPVGVIPILLPDGKDFSRETGRWLVGALSGLWLGIAGWSLWAANSPGMGDDATRVTYSGIVDERRFYAQATGHAHPLTAADYLDYPRMAAVLTALNNTPEGALLLPSGNYNQWDLVPMIRPSSGTAPGGKPAPKPQHAVFFTNMGMLGMNVGLDVRVIDQIGLVNPLAAHTERLKHARIGHDKNLFPDWVIADGPWVKWYPGIPGYIDQQWVTQAEAALQCPATRAVLNSVRAPITLHRFLSNVLHSYEFTRYRIDRVPRYELVRCGLDVPDGPGPPPRE.

Residues 1–28 form the signal peptide; sequence MVRVSLWLSVTAVAVLFGWGSWQRRWIA. The next 9 membrane-spanning stretches (helical) occupy residues 81 to 101, 115 to 135, 138 to 158, 183 to 203, 211 to 231, 263 to 283, 307 to 327, 338 to 358, and 370 to 390; these read YVAL…LMLG, AIML…RDFA, GLES…MVCW, VLVR…MLIA, VLIV…RMGY, PYAL…LMTA, SPPA…LYWI, VLLA…ILLP, and WLVG…LWAA.

The protein belongs to the AftB family.

The protein resides in the membrane. It participates in cell wall biogenesis; cell wall polysaccharide biosynthesis. Its function is as follows. Involved in the biosynthesis of the arabinogalactan (AG) region of the mycolylarabinogalactan-peptidoglycan (mAGP) complex, an essential component of the mycobacterial cell wall. Catalyzes the transfer of arabinofuranosyl (Araf) residues from the sugar donor decaprenyl-phospho-arabinose (DPA) to the arabinan domain to form terminal beta-(1-&gt;2)-linked Araf residues, which marks the end point for AG arabinan biosynthesis before decoration with mycolic acids. The polypeptide is Terminal beta-(1-&gt;2)-arabinofuranosyltransferase (aftB) (Mycobacterium tuberculosis (strain ATCC 25618 / H37Rv)).